Reading from the N-terminus, the 316-residue chain is MTAQQIDASGRLRHLLTLEGLPRETLLQLLDRAGQIRDAAVGRVGNKRQVLAGSAVCTLFFEPSTRTRSSFQLAAQRLGADVLNFDASTSSTRKGETACDTLRNLEAMGVRGFVVRHPDDGAVAALADAAGEGTALINAGDGRSSHPTQGLLDMLTLRQAKGPDFSKLKVVIVGDVKHSRVARTDLHALRTLGVGEIRVCGPQSLLPDDETLKGCVVGDDFDAMLEGVDALMMLRLQRERMEEGLVPSLEQYHAQYGLTNERLARAGKDAAVLHPGPINRGVEVTDEVADGPQSWVLRQVANGVAVRMAVLETLLG.

Residues arginine 66 and threonine 67 each coordinate carbamoyl phosphate. Lysine 94 is a binding site for L-aspartate. Carbamoyl phosphate-binding residues include arginine 116, histidine 146, and glutamine 149. 2 residues coordinate L-aspartate: arginine 180 and arginine 235. Residues glycine 276 and proline 277 each coordinate carbamoyl phosphate.

This sequence belongs to the aspartate/ornithine carbamoyltransferase superfamily. ATCase family. As to quaternary structure, heterododecamer (2C3:3R2) of six catalytic PyrB chains organized as two trimers (C3), and six regulatory PyrI chains organized as three dimers (R2).

The catalysed reaction is carbamoyl phosphate + L-aspartate = N-carbamoyl-L-aspartate + phosphate + H(+). The protein operates within pyrimidine metabolism; UMP biosynthesis via de novo pathway; (S)-dihydroorotate from bicarbonate: step 2/3. In terms of biological role, catalyzes the condensation of carbamoyl phosphate and aspartate to form carbamoyl aspartate and inorganic phosphate, the committed step in the de novo pyrimidine nucleotide biosynthesis pathway. This chain is Aspartate carbamoyltransferase catalytic subunit, found in Stenotrophomonas maltophilia (strain K279a).